The primary structure comprises 126 residues: Small ribosomal subunit protein uS12c (126 aa).

Belongs to the universal ribosomal protein uS12 family. Part of the 30S ribosomal subunit.

It is found in the plastid. The protein localises to the chloroplast. Functionally, with S4 and S5 plays an important role in translational accuracy. Located at the interface of the 30S and 50S subunits. The polypeptide is Small ribosomal subunit protein uS12c (rps12) (Trieres chinensis (Marine centric diatom)).